Reading from the N-terminus, the 669-residue chain is Epithelial sodium channel subunit gamma (669 aa).

Over 1 to 67 (MAPPYHGDTR…VVSRGRLRKF (67 aa)) the chain is Cytoplasmic. A helical transmembrane segment spans residues 68–88 (IWILLTLSAVGLILWQCAELI). The Extracellular portion of the chain corresponds to 89-551 (MSYYTASVSV…VILLSNFGGQ (463 aa)). 8 cysteine pairs are disulfide-bonded: C113–C300, C223–C231, C277–C284, C389–C474, C411–C470, C415–C466, C424–C451, and C426–C440. Residues 552–572 (LGLWMSCSMVCVIEIIEVFFI) traverse the membrane as a helical segment. At 573–669 (DSFSIVMRRR…LPDTLEGRSH (97 aa)) the chain is on the cytoplasmic side. Positions 592–619 (DRKAPRPQEPPQVNAPAKEGHDNPVCTD) are disordered.

This sequence belongs to the amiloride-sensitive sodium channel (TC 1.A.6) family. SCNN1G subfamily. In terms of assembly, component of the heterotrimeric epithelial sodium channel (ENaC) composed of an alpha/SCNN1A, a beta/SCNN1B and a gamma/SCNN1G subunit.

It is found in the apical cell membrane. It catalyses the reaction Na(+)(in) = Na(+)(out). With respect to regulation, originally identified and characterized by its inhibition by the diuretic drug amiloride. Functionally, this is one of the three pore-forming subunits of the heterotrimeric epithelial sodium channel (ENaC), a critical regulator of sodium balance and fluid homeostasis. ENaC operates in epithelial tissues, where it mediates the electrodiffusion of sodium ions from extracellular fluid through the apical membrane of cells, with water following osmotically. The polypeptide is Epithelial sodium channel subunit gamma (Pelodiscus sinensis (Chinese softshell turtle)).